Here is a 413-residue protein sequence, read N- to C-terminus: Amino acid transporter AVT3B (413 aa).

Residues 1–27 (MGLEEQGRAREDTPLLGKGRPLSSKFK) are Cytoplasmic-facing. A helical membrane pass occupies residues 28 to 48 (TFANVFIAIVGAGVLGLPYAF). The Vacuolar portion of the chain corresponds to 49 to 54 (KRTGWL). Residues 55–75 (MGLLTLFSVAALINHCMMLLV) traverse the membrane as a helical segment. Over 76-103 (HIRRKLGVSNIGSFGDLGFAACGNLGRF) the chain is Cytoplasmic. A helical transmembrane segment spans residues 104–124 (VVDILIILSQAGFCVGYLIFI). The Vacuolar portion of the chain corresponds to 125–145 (GNTLANLSKPTKSTTLMSLRH). The helical transmembrane segment at 146–166 (LMGVSPKSLYIWGCFPFQLGL) threads the bilayer. Residues 167-174 (NSIKTLTH) are Cytoplasmic-facing. Residues 175 to 195 (LAPLSIFADVVDLGAMAVVIV) form a helical membrane-spanning segment. Topologically, residues 196–207 (EDIKITVVQRPQ) are vacuolar. Residues 208–228 (VVAFGGMSVFFYGMGVAVYAF) form a helical membrane-spanning segment. The Cytoplasmic portion of the chain corresponds to 229-249 (EGVGMVLPLESETKDKDKFGK). Residues 250-270 (VLALSMLFIAVMYGSFGVLGY) form a helical membrane-spanning segment. At 271-288 (MAFGDDTMDIITANLGAG) the chain is on the vacuolar side. The chain crosses the membrane as a helical span at residues 289–309 (VVSSLVQLGLCINLFFTFPLM). Over 310-331 (MNPVFEIVERRFWSGMYCVWLR) the chain is Cytoplasmic. A helical membrane pass occupies residues 332-352 (WLLVLAVTLVALLVPNFADFL). Over 353–355 (SLV) the chain is Vacuolar. The helical transmembrane segment at 356 to 376 (GSSVCCALGFVLPSLFHLMVF) threads the bilayer. Over 377–390 (KDEMEWKQRALDVG) the chain is Cytoplasmic. A helical transmembrane segment spans residues 391–411 (ILLLGVILGVSGTWSSLTEIF). The Vacuolar segment spans residues 412 to 413 (QE).

Belongs to the amino acid/polyamine transporter 2 family. Amino acid/auxin permease (AAAP) (TC 2.A.18.8) subfamily. As to expression, ubiquitous.

The protein localises to the vacuole membrane. Functionally, translocates preferentially neutral amino acids from the vacuole to the cytoplasm. This Arabidopsis thaliana (Mouse-ear cress) protein is Amino acid transporter AVT3B.